We begin with the raw amino-acid sequence, 513 residues long: Xylose import ATP-binding protein XylG (513 aa).

ABC transporter domains follow at residues 5-242 (LEMK…VGRE) and 259-505 (LRIE…LRSE). 37–44 (GENGSGKS) lines the ATP pocket.

Belongs to the ABC transporter superfamily. Xylose importer (TC 3.A.1.2.4) family. The complex is composed of two ATP-binding proteins (XylG), two transmembrane proteins (XylH) and a solute-binding protein (XylF).

The protein localises to the cell inner membrane. It carries out the reaction D-xylose(out) + ATP + H2O = D-xylose(in) + ADP + phosphate + H(+). Its function is as follows. Part of the ABC transporter complex XylFGH involved in xylose import. Responsible for energy coupling to the transport system. The chain is Xylose import ATP-binding protein XylG from Shigella boydii serotype 4 (strain Sb227).